Consider the following 172-residue polypeptide: MERIFLIGARASGKTTAGRILAEKLGWRCADTDEMVQRRAGCSIADMVARDGWPVFREAEAGALQAACALTRVVVSTGGGMVLRADNRAALREGGIVFYLCAPAAVLASRLVLDPVVSQRPSLTGGNPAAEIAAVLAERDTLYRETAHHVVDACQPAAAVAGQMLRLLAAAG.

8–15 is a binding site for ATP; the sequence is GARASGKT.

Belongs to the shikimate kinase family.

The protein resides in the cytoplasm. It carries out the reaction shikimate + ATP = 3-phosphoshikimate + ADP + H(+). It functions in the pathway metabolic intermediate biosynthesis; chorismate biosynthesis; chorismate from D-erythrose 4-phosphate and phosphoenolpyruvate: step 5/7. This Oleidesulfovibrio alaskensis (strain ATCC BAA-1058 / DSM 17464 / G20) (Desulfovibrio alaskensis) protein is Shikimate kinase.